The primary structure comprises 191 residues: Adenylate kinase (191 aa).

12–17 (GSGKTT) provides a ligand contact to ATP. The NMP stretch occupies residues 34–63 (STGDLLRAESAKKTERGLLIEKFTSQGELV). Residues T35, R40, 61–63 (ELV), 88–91 (GYPR), and Q95 each bind AMP. Residues 130–136 (GRSRGAD) form an LID region. Residue R131 participates in ATP binding. AMP contacts are provided by R133 and R145. An ATP-binding site is contributed by R173.

This sequence belongs to the adenylate kinase family. As to quaternary structure, monomer.

It localises to the cytoplasm. It catalyses the reaction AMP + ATP = 2 ADP. It participates in purine metabolism; AMP biosynthesis via salvage pathway; AMP from ADP: step 1/1. In terms of biological role, catalyzes the reversible transfer of the terminal phosphate group between ATP and AMP. Plays an important role in cellular energy homeostasis and in adenine nucleotide metabolism. The sequence is that of Adenylate kinase from Helicobacter pylori (strain G27).